The sequence spans 216 residues: Cytochrome c biogenesis ATP-binding export protein CcmA (216 aa).

The region spanning 11-216 is the ABC transporter domain; the sequence is VSASKLTCIR…RKIRLDYRFV (206 aa). ATP is bound at residue 43–50; the sequence is GPNGAGKT.

The protein belongs to the ABC transporter superfamily. CcmA exporter (TC 3.A.1.107) family. The complex is composed of two ATP-binding proteins (CcmA) and two transmembrane proteins (CcmB).

It localises to the cell inner membrane. It catalyses the reaction heme b(in) + ATP + H2O = heme b(out) + ADP + phosphate + H(+). In terms of biological role, part of the ABC transporter complex CcmAB involved in the biogenesis of c-type cytochromes; once thought to export heme, this seems not to be the case, but its exact role is uncertain. Responsible for energy coupling to the transport system. The chain is Cytochrome c biogenesis ATP-binding export protein CcmA from Shewanella sp. (strain MR-7).